The chain runs to 108 residues: MAKKKTNEQPSVKEVPKPAEGEVICVVKKMLGAEHVQVICLDGKERLGRIPGKMKKKMWVKEGDVVLAAPWDFQPNKCDIIYKYSESEVRRLEEEQVVSADIIEQLRG.

In terms of domain architecture, S1-like spans 11 to 85 (SVKEVPKPAE…NKCDIIYKYS (75 aa)).

It belongs to the eIF-1A family.

Functionally, seems to be required for maximal rate of protein biosynthesis. Enhances ribosome dissociation into subunits and stabilizes the binding of the initiator Met-tRNA(I) to 40 S ribosomal subunits. In Sulfurisphaera tokodaii (strain DSM 16993 / JCM 10545 / NBRC 100140 / 7) (Sulfolobus tokodaii), this protein is Translation initiation factor 1A (eIF1A).